We begin with the raw amino-acid sequence, 221 residues long: Large ribosomal subunit protein uL4 (221 aa).

The disordered stretch occupies residues 56-83; sequence HATKTRGMVSGGGRKPWKQKGTGRARQG.

The protein belongs to the universal ribosomal protein uL4 family. In terms of assembly, part of the 50S ribosomal subunit.

Functionally, one of the primary rRNA binding proteins, this protein initially binds near the 5'-end of the 23S rRNA. It is important during the early stages of 50S assembly. It makes multiple contacts with different domains of the 23S rRNA in the assembled 50S subunit and ribosome. Forms part of the polypeptide exit tunnel. The sequence is that of Large ribosomal subunit protein uL4 from Bifidobacterium adolescentis (strain ATCC 15703 / DSM 20083 / NCTC 11814 / E194a).